A 329-amino-acid polypeptide reads, in one-letter code: Sex comb on midleg-like protein 1 (329 aa).

Positions 125 to 194 (NEVHESFSYP…SDFSEHNYQP (70 aa)) are disordered. Ser-138 carries the post-translational modification Phosphoserine. Positions 159-168 (FRMEEYQRAE) are enriched in basic and acidic residues. Ser-238 carries the post-translational modification Phosphoserine. The region spanning 258 to 325 (WSVEAVVLFL…YYIDRLKQGK (68 aa)) is the SAM domain.

The protein belongs to the SCM family. Highly expressed in testis and pancreas. Preferentially expressed in the germ stem cells of testis.

It localises to the nucleus. Its function is as follows. Putative Polycomb group (PcG) protein. PcG proteins act by forming multiprotein complexes, which are required to maintain the transcriptionally repressive state of homeotic genes throughout development. May be involved in spermatogenesis during sexual maturation. This is Sex comb on midleg-like protein 1 (SCML1) from Macaca mulatta (Rhesus macaque).